The primary structure comprises 148 residues: MKMELKVKPIENGTVIDHISGSKALKVYKILNIEEKLPITLALNVPSKKGVMKDILKIEGLELTRDDVNKIALISPDATINIIKEGIVIKKFKVNLPKRIDGIIKCTNPNCITNKENIEGKFSIEQKNTLKIRCEYCEKFINSIIISK.

Residues Cys106, Cys111, Cys134, and Cys137 each coordinate Zn(2+).

It belongs to the PyrI family. Contains catalytic and regulatory chains. Requires Zn(2+) as cofactor.

In terms of biological role, involved in allosteric regulation of aspartate carbamoyltransferase. The protein is Aspartate carbamoyltransferase regulatory chain of Methanococcus maripaludis (strain C6 / ATCC BAA-1332).